The following is a 345-amino-acid chain: Probable velvet family sexual development regulator LACBIDRAFT_317102 (345 aa).

Composition is skewed to polar residues over residues 1–13 (MFTTHPQGRSYRS) and 24–38 (EIQNSYDQHANNPPR). Disordered stretches follow at residues 1–43 (MFTT…TRRR), 138–189 (ESWT…SPSS), and 310–345 (RKRRKKGEIGSPLDDPKSKRKRTSLGSEDDEASDED). A Velvet domain is found at 62-306 (GQTIRAELDE…ARWGVRLNIR (245 aa)). Low complexity-rich tracts occupy residues 141–158 (TSRSPTQTSFSSSSPTLS) and 167–184 (SSPQTSSPTAAQSQASTP). Residues 336 to 345 (SEDDEASDED) are compositionally biased toward acidic residues.

Belongs to the velvet family.

The protein resides in the nucleus. Velvet-domain-containing protein that probably acts as a positive regulator of sexual development. In Laccaria bicolor (strain S238N-H82 / ATCC MYA-4686) (Bicoloured deceiver), this protein is Probable velvet family sexual development regulator LACBIDRAFT_317102.